The following is a 113-amino-acid chain: Nascent polypeptide-associated complex protein (113 aa).

The 69-residue stretch at 5–73 folds into the NAC-A/B domain; the sequence is GMNPAKMKQM…AKEVPKSLEI (69 aa).

This sequence belongs to the NAC-alpha family. Homodimer. Interacts with the ribosome. Binds ribosomal RNA.

Functionally, contacts the emerging nascent chain on the ribosome. This is Nascent polypeptide-associated complex protein from Methanosarcina acetivorans (strain ATCC 35395 / DSM 2834 / JCM 12185 / C2A).